The primary structure comprises 207 residues: High frequency lysogenization protein HflD homolog (207 aa).

The protein belongs to the HflD family.

Its subcellular location is the cytoplasm. It localises to the cell inner membrane. This chain is High frequency lysogenization protein HflD homolog, found in Azotobacter vinelandii (strain DJ / ATCC BAA-1303).